The chain runs to 180 residues: Nascent polypeptide-associated complex subunit alpha (180 aa).

The NAC-A/B domain occupies Ser16–Ile80. The tract at residues Ala81–Ile113 is disordered. Over residues Glu82–Thr100 the composition is skewed to low complexity. The UBA domain occupies Leu142 to Leu179.

This sequence belongs to the NAC-alpha family. As to quaternary structure, part of the nascent polypeptide-associated complex (NAC), consisting of EGD2 and EGD1. NAC associates with ribosomes via EGD1.

The protein resides in the cytoplasm. The protein localises to the nucleus. In terms of biological role, component of the nascent polypeptide-associated complex (NAC), a dynamic component of the ribosomal exit tunnel, protecting the emerging polypeptides from interaction with other cytoplasmic proteins to ensure appropriate nascent protein targeting. The NAC complex also promotes mitochondrial protein import by enhancing productive ribosome interactions with the outer mitochondrial membrane and blocks the inappropriate interaction of ribosomes translating non-secretory nascent polypeptides with translocation sites in the membrane of the endoplasmic reticulum. EGD2 may also be involved in transcription regulation. This Debaryomyces hansenii (strain ATCC 36239 / CBS 767 / BCRC 21394 / JCM 1990 / NBRC 0083 / IGC 2968) (Yeast) protein is Nascent polypeptide-associated complex subunit alpha (EGD2).